The following is a 1217-amino-acid chain: MSLIYFASGDSHANIEYQTISSTATEANQEQSERLHDRISKAQLQRLYERFKSAPDQVVGCADFRRMLEEVDIVFSDFTYTRLFLKINQNHDFLVDWNEFVSYLIFGFQEEDPSSQKESLIMPISAAPVVRKTEHRSAVCCITLLKVKSDQTPLEDMTESANYSFGGEDSPENSGMWVTASHEGQLRFWSAHMEPLRSAVSESIYCMSYAFYNNGKTHSKLVLGDYAGNVRILSYSPYLRGPFQAKPGAALVELTWADVLRGRIPLLIPKEYINLHNELISCVYYSLHMNALFASAEYRNTKKYRGRCPGLIMVSNDDRNNFRIPLGVSVFYVSEVKNILVTGGPDTFVRIWDVYISSEPSAILTGHNGGIVAVFVQPEENKVYSVDYHKIIKVWDLQEHTLLQTYGELVRIIHHSEMDIKYYYHSHLRELMVAGRKLIQVKCCPRVRVDLTDGNTHAAPVSVVLYNRLFRNIVTCGLDSYIIVWDPWTGRRKIIMKNCHTKMIYGETIDIEITAACFDPLEQFLLTGARDGSLKIWNYNNSVVVRNMSIQMDQEVTAVIWVVDRILAMGWDRQVTEFNDVEGREYGDPKKWAKFHTDDITCADVKLGEGVVTATYSGEIIFWKLETGQPYRRYNVMDPSQFIELKLTAEEEKLSRRSKRISSLLGANRRSASMLAIKPDEIKDYGANIPVSVQAVLFLQKRPMTKDHGSVFISLDTGIIQVYSHHQHGGHIKEFIAVHKVGDCVLTMATDRKNRFLYTGTAFGYIKIWHIVNYCIPEAEKTHVCMPKLRLDFIFLRKELFLTRAKRMVRNQPEPMLVSSYKGHLKAINSIGFINLPKILFSGSHDYSCRLWTQSGRYLGTLGTVLPWSKLSPFERAGEENRPYRLPPDIKKVASSTTLKVISGVQHSFQVKRPKPTEEREDEGEVEDTGTEMKNIFDRPLREPILGKHFELPGRSAIEQRIELDTTQLYVPIYSHLRVHPSDVMENLPTPPIIGQVKSENYLDHYMPVVGKVDPNTSAINIREPNKVIRSKAGGQVGQARASSTWGKPKTNSILGMPRAESSQGKARASSAKAGVSSGYGRTNFGPNPSRVRSNSPKVSFMPSQLKTCRKPESSPRKAKTSPARAKSVSFPAKANPVSTSAKANPTCTSVKTNPVPTSAKASRVSTSAKSNPVSTSANAKPDIMPVKIKPVVKKPSRNTAPVQITTSIAKTKKDKP.

8 WD repeats span residues 155–199, 323–362, 366–405, 456–495, 508–547, 595–635, 740–779, and 823–862; these read EDMT…LRSA, RIPL…EPSA, GHNG…LLQT, THAA…RKII, TIDI…VVRN, FHTD…RRYN, KVGD…IPEA, and GHLK…LGTL. Disordered regions lie at residues 910–929 and 1033–1217; these read QVKR…VEDT and AGGQ…KDKP. A compositionally biased stretch (acidic residues) spans 919–929; the sequence is EREDEGEVEDT. Composition is skewed to polar residues over residues 1041–1054, 1085–1107, and 1137–1179; these read RASS…TNSI, FGPN…SQLK, and PVST…TSAN. The span at 1181–1190 shows a compositional bias: low complexity; the sequence is KPDIMPVKIK. The span at 1198–1210 shows a compositional bias: polar residues; sequence RNTAPVQITTSIA.

The polypeptide is WD repeat-containing protein on Y chromosome (Drosophila mojavensis (Fruit fly)).